A 136-amino-acid polypeptide reads, in one-letter code: Translation initiation factor 5A (136 aa).

K37 carries the hypusine modification.

It belongs to the eIF-5A family.

The protein localises to the cytoplasm. Its function is as follows. Functions by promoting the formation of the first peptide bond. This Thermococcus onnurineus (strain NA1) protein is Translation initiation factor 5A (eIF5A).